The primary structure comprises 703 residues: Heat shock protein 75 kDa, mitochondrial (703 aa).

The N-terminal 56 residues, M1–F56, are a transit peptide targeting the mitochondrion. Residues N118 and D157 each contribute to the ATP site. A Phosphoserine modification is found at S169. N170 provides a ligand contact to ATP. T173 carries the phosphothreonine modification. Residues F204 and R401 each contribute to the ATP site. N6-acetyllysine occurs at positions 423, 430, and 465. Residue T493 is modified to Phosphothreonine.

The protein belongs to the heat shock protein 90 family. As to quaternary structure, binds to the intracellular domain of tumor necrosis factor type 1 receptor. Binds to RB1. Interacts with SRC. Interacts with SDHA.

It localises to the mitochondrion. The protein resides in the mitochondrion inner membrane. Its subcellular location is the mitochondrion matrix. In terms of biological role, chaperone that expresses an ATPase activity. Involved in maintaining mitochondrial function and polarization, downstream of PINK1 and mitochondrial complex I. Is a negative regulator of mitochondrial respiration able to modulate the balance between oxidative phosphorylation and aerobic glycolysis. The impact of TRAP1 on mitochondrial respiration is probably mediated by modulation of mitochondrial SRC and inhibition of SDHA. This is Heat shock protein 75 kDa, mitochondrial (TRAP1) from Bos taurus (Bovine).